The chain runs to 185 residues: Protein GrpE (185 aa).

Positions 1–20 are enriched in basic and acidic residues; sequence MSQEKKEELQSEAQVTKEET. Positions 1–28 are disordered; the sequence is MSQEKKEELQSEAQVTKEETPQANEAAA.

It belongs to the GrpE family. In terms of assembly, homodimer.

Its subcellular location is the cytoplasm. Its function is as follows. Participates actively in the response to hyperosmotic and heat shock by preventing the aggregation of stress-denatured proteins, in association with DnaK and GrpE. It is the nucleotide exchange factor for DnaK and may function as a thermosensor. Unfolded proteins bind initially to DnaJ; upon interaction with the DnaJ-bound protein, DnaK hydrolyzes its bound ATP, resulting in the formation of a stable complex. GrpE releases ADP from DnaK; ATP binding to DnaK triggers the release of the substrate protein, thus completing the reaction cycle. Several rounds of ATP-dependent interactions between DnaJ, DnaK and GrpE are required for fully efficient folding. The protein is Protein GrpE of Sulfurimonas denitrificans (strain ATCC 33889 / DSM 1251) (Thiomicrospira denitrificans (strain ATCC 33889 / DSM 1251)).